Reading from the N-terminus, the 1040-residue chain is Multidrug resistance protein MdtB (1040 aa).

A run of 12 helical transmembrane segments spans residues 16–36, 347–367, 369–389, 396–416, 440–460, 472–492, 537–557, 863–883, 888–908, 911–931, 968–988, and 998–1018; these read FIMR…AGII, LMMA…NIPA, IIPG…MVFL, LTLM…IVVI, IGFT…PLLF, FAIT…TLTP, WLTL…WVFI, LGST…VLGI, FIHP…ALLA, IAGS…IGIV, ILMT…STGV, and IGMV…TPVI.

Belongs to the resistance-nodulation-cell division (RND) (TC 2.A.6) family. MdtB subfamily. As to quaternary structure, part of a tripartite efflux system composed of MdtA, MdtB and MdtC. MdtB forms a heteromultimer with MdtC.

It is found in the cell inner membrane. In terms of biological role, the MdtABC tripartite complex confers resistance against novobiocin and deoxycholate. The polypeptide is Multidrug resistance protein MdtB (Escherichia coli O9:H4 (strain HS)).